The following is a 40-amino-acid chain: Photosystem II reaction center protein X (40 aa).

A helical transmembrane segment spans residues 10-30 (WSLVWGTVIVVIPVTVGLVFI).

This sequence belongs to the PsbX family. Type 1 subfamily. In terms of assembly, PSII is composed of 1 copy each of membrane proteins PsbA, PsbB, PsbC, PsbD, PsbE, PsbF, PsbH, PsbI, PsbJ, PsbK, PsbL, PsbM, PsbT, PsbX, PsbY, PsbZ, Psb30/Ycf12, peripheral proteins PsbO, CyanoQ (PsbQ), PsbU, PsbV and a large number of cofactors. It forms dimeric complexes.

Its subcellular location is the cellular thylakoid membrane. Its function is as follows. Involved in the binding and/or turnover of quinones at the Q(B) site of photosystem II (PSII). PSII is a light-driven water plastoquinone oxidoreductase, using light energy to abstract electrons from H(2)O, generating a proton gradient subsequently used for ATP formation. In Crocosphaera subtropica (strain ATCC 51142 / BH68) (Cyanothece sp. (strain ATCC 51142)), this protein is Photosystem II reaction center protein X.